Here is a 205-residue protein sequence, read N- to C-terminus: Methylthioribulose-1-phosphate dehydratase (205 aa).

Residues His96 and His98 each coordinate Zn(2+).

The protein belongs to the aldolase class II family. MtnB subfamily. Zn(2+) serves as cofactor.

It catalyses the reaction 5-(methylsulfanyl)-D-ribulose 1-phosphate = 5-methylsulfanyl-2,3-dioxopentyl phosphate + H2O. It participates in amino-acid biosynthesis; L-methionine biosynthesis via salvage pathway; L-methionine from S-methyl-5-thio-alpha-D-ribose 1-phosphate: step 2/6. Catalyzes the dehydration of methylthioribulose-1-phosphate (MTRu-1-P) into 2,3-diketo-5-methylthiopentyl-1-phosphate (DK-MTP-1-P). This chain is Methylthioribulose-1-phosphate dehydratase, found in Pseudomonas aeruginosa (strain UCBPP-PA14).